The primary structure comprises 203 residues: Probable proteasome subunit beta type-1 (203 aa).

The propeptide at Met1–Gly10 is removed in mature form. Catalysis depends on Thr11, which acts as the Nucleophile.

This sequence belongs to the peptidase T1B family. The 26S proteasome consists of a 20S proteasome core and two 19S regulatory subunits. The 20S proteasome core is composed of 28 subunits that are arranged in four stacked rings, resulting in a barrel-shaped structure. The two end rings are each formed by seven alpha subunits, and the two central rings are each formed by seven beta subunits. The catalytic chamber with the active sites is on the inside of the barrel.

It is found in the cytoplasm. The protein resides in the nucleus. The enzyme catalyses Cleavage of peptide bonds with very broad specificity.. Its function is as follows. The proteasome degrades poly-ubiquitinated proteins in the cytoplasm and in the nucleus. It is essential for the regulated turnover of proteins and for the removal of misfolded proteins. The proteasome is a multicatalytic proteinase complex that is characterized by its ability to cleave peptides with Arg, Phe, Tyr, Leu, and Glu adjacent to the leaving group at neutral or slightly basic pH. It has an ATP-dependent proteolytic activity. The protein is Probable proteasome subunit beta type-1 (PRE3) of Encephalitozoon cuniculi (strain GB-M1) (Microsporidian parasite).